The chain runs to 297 residues: Beta-glucoside kinase (297 aa).

5–11 (AFDIGGT) lines the ATP pocket.

Belongs to the ROK (NagC/XylR) family. Homotetramer.

The catalysed reaction is D-cellobiose + ATP = 6-phospho-beta-D-glucosyl-(1-&gt;4)-D-glucose + ADP + H(+). Is inhibited by N-ethylmaleimide in vitro, but ATP affords considerable protection against the inhibitor. Functionally, catalyzes the ATP-dependent phosphorylation of a wide variety of beta-D-glucosides, to produce 6-phospho-beta-D-glucosides including cellobiose-6'-P, gentiobiose-6'-P, cellobiitol-6-P, salicin-6-P, and arbutin-6-P. Is not able to phosphorylate alpha-D-glucosides. May have a dual role of kinase and transcriptional regulator of the cellobiose-PTS operon. In Klebsiella pneumoniae, this protein is Beta-glucoside kinase (bglK).